A 100-amino-acid chain; its full sequence is Aspartyl/glutamyl-tRNA(Asn/Gln) amidotransferase subunit C (100 aa).

The protein belongs to the GatC family. Heterotrimer of A, B and C subunits.

The enzyme catalyses L-glutamyl-tRNA(Gln) + L-glutamine + ATP + H2O = L-glutaminyl-tRNA(Gln) + L-glutamate + ADP + phosphate + H(+). It catalyses the reaction L-aspartyl-tRNA(Asn) + L-glutamine + ATP + H2O = L-asparaginyl-tRNA(Asn) + L-glutamate + ADP + phosphate + 2 H(+). Its function is as follows. Allows the formation of correctly charged Asn-tRNA(Asn) or Gln-tRNA(Gln) through the transamidation of misacylated Asp-tRNA(Asn) or Glu-tRNA(Gln) in organisms which lack either or both of asparaginyl-tRNA or glutaminyl-tRNA synthetases. The reaction takes place in the presence of glutamine and ATP through an activated phospho-Asp-tRNA(Asn) or phospho-Glu-tRNA(Gln). This Streptococcus pneumoniae serotype 19F (strain G54) protein is Aspartyl/glutamyl-tRNA(Asn/Gln) amidotransferase subunit C.